Consider the following 398-residue polypeptide: Enolase (398 aa).

Glutamine 154 is a (2R)-2-phosphoglycerate binding site. The Proton donor role is filled by glutamate 196. Mg(2+) is bound by residues aspartate 232, glutamate 273, and aspartate 300. (2R)-2-phosphoglycerate is bound by residues lysine 325, arginine 354, serine 355, and lysine 376. Residue lysine 325 is the Proton acceptor of the active site.

It belongs to the enolase family. Mg(2+) serves as cofactor.

The protein localises to the cytoplasm. It is found in the secreted. Its subcellular location is the cell surface. It carries out the reaction (2R)-2-phosphoglycerate = phosphoenolpyruvate + H2O. Its pathway is carbohydrate degradation; glycolysis; pyruvate from D-glyceraldehyde 3-phosphate: step 4/5. Functionally, catalyzes the reversible conversion of 2-phosphoglycerate (2-PG) into phosphoenolpyruvate (PEP). It is essential for the degradation of carbohydrates via glycolysis. In Natronomonas pharaonis (strain ATCC 35678 / DSM 2160 / CIP 103997 / JCM 8858 / NBRC 14720 / NCIMB 2260 / Gabara) (Halobacterium pharaonis), this protein is Enolase.